We begin with the raw amino-acid sequence, 115 residues long: HTH-type transcriptional regulator SarR (115 aa).

Positions 51-74 (SKEIAKCSEFKPYYLTKALQKLKD) form a DNA-binding region, H-T-H motif.

It belongs to the SarA family. As to quaternary structure, homodimer.

It localises to the cytoplasm. Functionally, negative regulator of sarA transcription at late exponential and stationary growth phases. It contributes to the modulation of target genes downstream of the sarA regulatory cascade. Also, positively regulates expression of primary transcripts RNAII and RNAIII generated by agr (virulence accessory gene regulator) locus. The polypeptide is HTH-type transcriptional regulator SarR (sarR) (Staphylococcus aureus (strain NCTC 8325 / PS 47)).